Reading from the N-terminus, the 137-residue chain is Ribosome-binding factor A (137 aa).

This sequence belongs to the RbfA family. In terms of assembly, monomer. Binds 30S ribosomal subunits, but not 50S ribosomal subunits or 70S ribosomes.

Its subcellular location is the cytoplasm. In terms of biological role, one of several proteins that assist in the late maturation steps of the functional core of the 30S ribosomal subunit. Associates with free 30S ribosomal subunits (but not with 30S subunits that are part of 70S ribosomes or polysomes). Required for efficient processing of 16S rRNA. May interact with the 5'-terminal helix region of 16S rRNA. The polypeptide is Ribosome-binding factor A (Cereibacter sphaeroides (strain ATCC 17029 / ATH 2.4.9) (Rhodobacter sphaeroides)).